A 1103-amino-acid polypeptide reads, in one-letter code: Isoleucine--tRNA ligase (1103 aa).

A 'HIGH' region motif is present at residues 53–63 (PFANGLPHYGH). The 'KMSKS' region motif lies at 628 to 632 (KLSKR). Residue lysine 631 participates in ATP binding.

This sequence belongs to the class-I aminoacyl-tRNA synthetase family. IleS type 2 subfamily. In terms of assembly, monomer. Zn(2+) serves as cofactor.

The protein resides in the cytoplasm. The catalysed reaction is tRNA(Ile) + L-isoleucine + ATP = L-isoleucyl-tRNA(Ile) + AMP + diphosphate. In terms of biological role, catalyzes the attachment of isoleucine to tRNA(Ile). As IleRS can inadvertently accommodate and process structurally similar amino acids such as valine, to avoid such errors it has two additional distinct tRNA(Ile)-dependent editing activities. One activity is designated as 'pretransfer' editing and involves the hydrolysis of activated Val-AMP. The other activity is designated 'posttransfer' editing and involves deacylation of mischarged Val-tRNA(Ile). This is Isoleucine--tRNA ligase from Rickettsia akari (strain Hartford).